The following is a 487-amino-acid chain: Glutamyl-tRNA(Gln) amidotransferase subunit A (487 aa).

Residues K75 and S150 each act as charge relay system in the active site. The Acyl-ester intermediate role is filled by S174.

The protein belongs to the amidase family. GatA subfamily. As to quaternary structure, heterotrimer of A, B and C subunits.

It carries out the reaction L-glutamyl-tRNA(Gln) + L-glutamine + ATP + H2O = L-glutaminyl-tRNA(Gln) + L-glutamate + ADP + phosphate + H(+). Allows the formation of correctly charged Gln-tRNA(Gln) through the transamidation of misacylated Glu-tRNA(Gln) in organisms which lack glutaminyl-tRNA synthetase. The reaction takes place in the presence of glutamine and ATP through an activated gamma-phospho-Glu-tRNA(Gln). In Deinococcus deserti (strain DSM 17065 / CIP 109153 / LMG 22923 / VCD115), this protein is Glutamyl-tRNA(Gln) amidotransferase subunit A.